We begin with the raw amino-acid sequence, 372 residues long: MGVKGLNQLIKEHSPSAYKEFQLKNLFGRKVAIDASMCLYQFLIAVRQSDGQQLTNEDGETTSHLSGMFYRTIKMVENNIKPVYVFDGKPPVLKGGELEKRLLRREEAQKQKTALGDEGTVEEVLKFEKRLVRVTREQNEEAKKLLQLMGIPCVDAPCEAEAQCAELARGGKVYAAASEDMDTLCYEPPFLLRHLTFSEARKMPIDQIEYKDAIAGLDMTKEQFIDLCILLGCDYCESIKGIGQATAFKLIKEHGSLDNIVEWIKNNKTKYTLPENWPFDEARQLFMNPEVTNASEISLKWKEPDVDGLIEFMVKQKGFSEDRIRSGAEKLKKGLKGGVQGRLDGFFKVVKTDDKKRKADPKESKASKKKKK.

Residues 1–105 form an N-domain region; that stretch reads MGVKGLNQLI…GELEKRLLRR (105 aa). Asp34 contacts Mg(2+). Residues Arg47 and Arg71 each contribute to the DNA site. Mg(2+) contacts are provided by Asp87, Glu159, Glu161, Asp180, and Asp182. Positions 123 to 254 are I-domain; sequence EVLKFEKRLV…ATAFKLIKEH (132 aa). Glu159 contributes to the DNA binding site. Gly232 and Asp234 together coordinate DNA. Asp234 is a Mg(2+) binding site. Residues 339–347 form an interaction with PCNA region; that stretch reads VQGRLDGFF. Over residues 353 to 366 the composition is skewed to basic and acidic residues; it reads DDKKRKADPKESKA. The interval 353–372 is disordered; it reads DDKKRKADPKESKASKKKKK.

This sequence belongs to the XPG/RAD2 endonuclease family. FEN1 subfamily. As to quaternary structure, interacts with PCNA. Three molecules of RAD27 bind to one PCNA trimer with each molecule binding to one PCNA monomer. PCNA stimulates the nuclease activity without altering cleavage specificity. Mg(2+) is required as a cofactor. Post-translationally, phosphorylated. Phosphorylation upon DNA damage induces relocalization to the nuclear plasma.

It localises to the nucleus. The protein resides in the nucleolus. Its subcellular location is the nucleoplasm. It is found in the mitochondrion. In terms of biological role, structure-specific nuclease with 5'-flap endonuclease and 5'-3' exonuclease activities involved in DNA replication and repair. During DNA replication, cleaves the 5'-overhanging flap structure that is generated by displacement synthesis when DNA polymerase encounters the 5'-end of a downstream Okazaki fragment. It enters the flap from the 5'-end and then tracks to cleave the flap base, leaving a nick for ligation. Also involved in the long patch base excision repair (LP-BER) pathway, by cleaving within the apurinic/apyrimidinic (AP) site-terminated flap. Acts as a genome stabilization factor that prevents flaps from equilibrating into structures that lead to duplications and deletions. Also possesses 5'-3' exonuclease activity on nicked or gapped double-stranded DNA, and exhibits RNase H activity. Also involved in replication and repair of rDNA and in repairing mitochondrial DNA. The protein is Flap endonuclease 1 of Candida albicans (strain WO-1) (Yeast).